Reading from the N-terminus, the 546-residue chain is Src substrate cortactin (546 aa).

A disordered region spans residues 1–28 (MWKASAGHAVSITQDDGGADDWETDPDF). Positions 17–28 (GGADDWETDPDF) are enriched in acidic residues. Cortactin repeat units lie at residues 80–116 (ASHGYGGKFGVEQDRMDRSAVGHEYQSKLSKHCSQVD), 117–153 (SVRGFGGKFGVQMDRVDQSAVGFEYQGKTEKHASQKD), 154–190 (YSSGFGGKYGVQADRVDKSAVGFDYQGKTEKHESQKD), 191–227 (YSKGFGGKYGIDKDKVDKSAVGFEYQGKTEKHESQKD), 228–264 (YVKGFGGKFGVQTDRQDKCALGWDHQEKLQLHESQKD), and 265–301 (YKTGFGGKFGVQSERQDSSAVGFDYKERLAKHESQQD). Lys87 and Lys107 each carry N6-acetyllysine. Ser113 bears the Phosphoserine mark. Arg119 is modified (omega-N-methylarginine). An N6-acetyllysine modification is found at Lys124. Lys144 is modified (N6-acetyllysine; alternate). A Glycyl lysine isopeptide (Lys-Gly) (interchain with G-Cter in SUMO1); alternate cross-link involves residue Lys144. Lys144 participates in a covalent cross-link: Glycyl lysine isopeptide (Lys-Gly) (interchain with G-Cter in SUMO2); alternate. Phosphoserine is present on Ser150. Residues Lys152, Lys161, and Lys171 each carry the N6-acetyllysine modification. Position 181 is an N6-acetyllysine; alternate (Lys181). A Glycyl lysine isopeptide (Lys-Gly) (interchain with G-Cter in SUMO1); alternate cross-link involves residue Lys181. Lys181 participates in a covalent cross-link: Glycyl lysine isopeptide (Lys-Gly) (interchain with G-Cter in SUMO2); alternate. N6-acetyllysine is present on residues Lys193 and Lys198. Lys218 is covalently cross-linked (Glycyl lysine isopeptide (Lys-Gly) (interchain with G-Cter in SUMO1)). An N6-acetyllysine modification is found at Lys235. The residue at position 261 (Ser261) is a Phosphoserine. The residue at position 272 (Lys272) is an N6-acetyllysine. N6-acetyllysine; alternate is present on Lys295. Lys295 participates in a covalent cross-link: Glycyl lysine isopeptide (Lys-Gly) (interchain with G-Cter in SUMO2); alternate. One copy of the Cortactin 7; truncated repeat lies at 302–324 (YAKGFGGKYGVQKDRMDKNASTF). N6-acetyllysine is present on residues Lys304, Lys309, Lys314, and Lys346. Residues 348 to 401 (SNIRANFENLAKEREQEDRRKAEAERAQRMAKERQEQEEARRKLEEQARAKKQT) are a coiled coil. The interval 355 to 424 (ENLAKEREQE…PPSSPIYEDA (70 aa)) is disordered. The span at 357 to 396 (LAKEREQEDRRKAEAERAQRMAKERQEQEEARRKLEEQAR) shows a compositional bias: basic and acidic residues. Thr401 bears the Phosphothreonine mark. Ser405, Ser407, Ser417, and Ser418 each carry phosphoserine. Residues Tyr421 and Tyr442 each carry the phosphotyrosine modification. Ser443 is subject to Phosphoserine. Phosphotyrosine; by FAK1 is present on Tyr466. Phosphotyrosine; by SRC occurs at positions 482 and 485. The SH3 domain maps to 488–546 (DLGITAIALYDYQAAGDDEISFDPDDIITNIEMIDDGWWRGVCKGRYGLFPANYVELRQ).

In terms of assembly, part of a complex composed of NEDD9, AURKA and CTTN; within the complex NEDD9 acts as a scaffold protein and is required for complex formation. Interacts (via N-terminus) with NEDD9. Identified in a complex containing FGFR4, NCAM1, CDH2, PLCG1, FRS2, SRC, SHC1, GAP43 and CTTN. Forms a complex with ABL1 and MYLK. Interacts with SHANK2 and SHANK3 (via its SH3 domain). Interacts with PLXDC2 and SRCIN1. Interacts with SAMSN1 (via SH3 domain). Interacts (via SH3 domain) with ASAP1 (via Pro-rich region). Interacts (via SH3 domain) with DNM2. Interacts with ACTN1. Interacts with FER. Interacts with KCNA2 (via non-phosphorylated C-terminus). Interacts with FGD1. Interacts with ABL2. Interacts with CTTNBP2NL; this interaction may target CTTN to stress fibers. Interacts with CTTNBP2; this interaction may target CTTN at the cell cortex or dendritic spines. Interacts with KCNH1. Interacts (via SH3 domain) with DIP2A (via N-terminus); the interaction enhances CTTN acetylation and is required for proper synaptic transmission. Interacts with XIRP1 (via N-terminus); the interaction promotes CTTN localization to intercalated disks in cardiomyocytes. Acetylated. In terms of processing, phosphorylated by FER. Phosphorylated in response to FGR activation. Phosphorylation by SRC promotes MYLK binding. Phosphorylated on tyrosine residues in response to CHRM1 activation. Phosphorylated by PTK2/FAK1 in response to cell adhesion. Tyrosine phosphorylation in transformed cells may contribute to cellular growth regulation and transformation. Phosphorylated by PKN2 at both serine and threonine residues in a GTP-bound Rac1-dependent manner in hyaluronan-induced astrocytes and hence down-regulated CTTN ability to associate with filamentous actin. As to expression, expressed at intercalated disks in the heart (at protein level). Expressed in most tissues, except in B-lymphocytes or plasma cells.

Its subcellular location is the cytoplasm. It is found in the cytoskeleton. It localises to the cell projection. The protein localises to the lamellipodium. The protein resides in the ruffle. Its subcellular location is the dendrite. It is found in the cell membrane. It localises to the podosome. The protein localises to the cell junction. The protein resides in the focal adhesion. Its subcellular location is the membrane. It is found in the clathrin-coated pit. It localises to the dendritic spine. The protein localises to the cell cortex. The protein resides in the endoplasmic reticulum. Its function is as follows. Contributes to the organization of the actin cytoskeleton and cell shape. Plays a role in the formation of lamellipodia and in cell migration. Plays a role in the regulation of neuron morphology, axon growth and formation of neuronal growth cones. Through its interaction with CTTNBP2, involved in the regulation of neuronal spine density. Plays a role in focal adhesion assembly and turnover. In complex with ABL1 and MYLK regulates cortical actin-based cytoskeletal rearrangement critical to sphingosine 1-phosphate (S1P)-mediated endothelial cell (EC) barrier enhancement. Plays a role in intracellular protein transport and endocytosis, and in modulating the levels of potassium channels present at the cell membrane. Plays a role in receptor-mediated endocytosis via clathrin-coated pits. Required for stabilization of KCNH1 channels at the cell membrane. The chain is Src substrate cortactin (Cttn) from Mus musculus (Mouse).